Here is a 222-residue protein sequence, read N- to C-terminus: 7-cyano-7-deazaguanine synthase (222 aa).

ATP is bound at residue 8-18; sequence LSGGMDSTTLA. Zn(2+) is bound by residues Cys188, Cys196, Cys199, and Cys202.

The protein belongs to the QueC family. Zn(2+) serves as cofactor.

It catalyses the reaction 7-carboxy-7-deazaguanine + NH4(+) + ATP = 7-cyano-7-deazaguanine + ADP + phosphate + H2O + H(+). It functions in the pathway purine metabolism; 7-cyano-7-deazaguanine biosynthesis. In terms of biological role, catalyzes the ATP-dependent conversion of 7-carboxy-7-deazaguanine (CDG) to 7-cyano-7-deazaguanine (preQ(0)). This chain is 7-cyano-7-deazaguanine synthase, found in Methanoculleus marisnigri (strain ATCC 35101 / DSM 1498 / JR1).